Reading from the N-terminus, the 249-residue chain is uncharacterized protein (249 aa).

The N-terminal stretch at methionine 1 to alanine 36 is a signal peptide. The disordered stretch occupies residues alanine 227–glutamine 249.

This is an uncharacterized protein from Mycobacterium tuberculosis (strain CDC 1551 / Oshkosh).